Here is a 138-residue protein sequence, read N- to C-terminus: Acyl carrier protein 1, chloroplastic (138 aa).

The N-terminal 56 residues, 1 to 56 (MASLSATTTVRVQPSSSSLHKLSQGNGRCSSIVCLDWGKSSFPTLRTSRRRSFISA), are a transit peptide targeting the chloroplast. The Carrier domain occupies 59-134 (KETIDKVCDI…QAADVIESLL (76 aa)). An O-(pantetheine 4'-phosphoryl)serine modification is found at Ser-94.

This sequence belongs to the acyl carrier protein (ACP) family. In terms of processing, 4'-phosphopantetheine is transferred from CoA to a specific serine of apo-ACP by acpS. This modification is essential for activity because fatty acids are bound in thioester linkage to the sulfhydryl of the prosthetic group.

It localises to the plastid. The protein resides in the chloroplast. The protein operates within lipid metabolism; fatty acid biosynthesis. Functionally, carrier of the growing fatty acid chain in fatty acid biosynthesis. This is Acyl carrier protein 1, chloroplastic (ACL1.1) from Spinacia oleracea (Spinach).